The primary structure comprises 126 residues: Large ribosomal subunit protein bL12 (126 aa).

Belongs to the bacterial ribosomal protein bL12 family. In terms of assembly, homodimer. Part of the ribosomal stalk of the 50S ribosomal subunit. Forms a multimeric L10(L12)X complex, where L10 forms an elongated spine to which 2 to 4 L12 dimers bind in a sequential fashion. Binds GTP-bound translation factors.

Functionally, forms part of the ribosomal stalk which helps the ribosome interact with GTP-bound translation factors. Is thus essential for accurate translation. The protein is Large ribosomal subunit protein bL12 of Caulobacter sp. (strain K31).